Reading from the N-terminus, the 1005-residue chain is Negative regulator of pleiotropic drug resistance STB5 (1005 aa).

The disordered stretch occupies residues 1–28 (MSGPDKGSDSGQTANDPKQKKARNGQME). The zn(2)-C6 fungal-type DNA-binding region spans 32–59 (CARCRKLKKKCPRQLPECSNCLKAREPC). 3 disordered regions span residues 129–151 (GGEQQYNNGPPISGIDGNDSINR), 666–693 (KGKSRSSKRFEKSKESDSDRGVTEEDVK), and 763–831 (TKPT…SSLR). Residues 673-693 (KRFEKSKESDSDRGVTEEDVK) show a composition bias toward basic and acidic residues. Residues 763–773 (TKPTANIMNDQ) show a composition bias toward polar residues. Positions 792 to 801 (EGPKSLKEGN) are enriched in basic and acidic residues.

It localises to the nucleus. Functionally, transcription factor that negatively regulates pleiotropic drug resistance genes, including the ABC transporter genes CDR1, PDH1, and YOR1. The protein is Negative regulator of pleiotropic drug resistance STB5 of Candida glabrata (strain ATCC 2001 / BCRC 20586 / JCM 3761 / NBRC 0622 / NRRL Y-65 / CBS 138) (Yeast).